A 361-amino-acid polypeptide reads, in one-letter code: MAGNSIGQLFRVTTFGESHGTALGCIVDGVPPGLPLTQADLQVDLDRRKPGTSRYTTQRREPDQVRILSGVFNGVTTGTSIGLLIENTDQRSQDYSEIKDVFRPGHADYTYEQKYGLRDYRGGGRSSARETAMRVAAGAIAKKYLKQKFGIEVKGYLSQLGPISCELVDWSIVETNPFFCPDPSRLDALDEYMRALKKEGNSIGAKVTVVAEGVPAGLGEPVFDRLDADLAHALMSINAVKGVEIGDGFDVVTLKGTENRDEITKEGFSSNHAGGVLGGISSGQPIIAHIALKPTSSITIAGKTLNRQGEEVDMITKGRHDPCVGIRAVPIAEAMMAIVLLDHALRQRGQCGDVIPPLMQW.

2 residues coordinate NADP(+): arginine 48 and arginine 54. FMN is bound by residues 125–127, 238–239, glycine 278, 293–297, and arginine 319; these read RSS, NA, and KPTSS.

This sequence belongs to the chorismate synthase family. Homotetramer. The cofactor is FMNH2.

It carries out the reaction 5-O-(1-carboxyvinyl)-3-phosphoshikimate = chorismate + phosphate. It functions in the pathway metabolic intermediate biosynthesis; chorismate biosynthesis; chorismate from D-erythrose 4-phosphate and phosphoenolpyruvate: step 7/7. Its function is as follows. Catalyzes the anti-1,4-elimination of the C-3 phosphate and the C-6 proR hydrogen from 5-enolpyruvylshikimate-3-phosphate (EPSP) to yield chorismate, which is the branch point compound that serves as the starting substrate for the three terminal pathways of aromatic amino acid biosynthesis. This reaction introduces a second double bond into the aromatic ring system. In Proteus mirabilis (strain HI4320), this protein is Chorismate synthase.